A 358-amino-acid polypeptide reads, in one-letter code: Magnesium-protoporphyrin IX monomethyl ester [oxidative] cyclase (358 aa).

It belongs to the AcsF family. It depends on Fe cation as a cofactor.

The catalysed reaction is Mg-protoporphyrin IX 13-monomethyl ester + 3 NADPH + 3 O2 + 2 H(+) = 3,8-divinyl protochlorophyllide a + 3 NADP(+) + 5 H2O. The protein operates within porphyrin-containing compound metabolism; chlorophyll biosynthesis (light-independent). Functionally, catalyzes the formation of the isocyclic ring in chlorophyll biosynthesis. Mediates the cyclase reaction, which results in the formation of divinylprotochlorophyllide (Pchlide) characteristic of all chlorophylls from magnesium-protoporphyrin IX 13-monomethyl ester (MgPMME). This chain is Magnesium-protoporphyrin IX monomethyl ester [oxidative] cyclase, found in Trichodesmium erythraeum (strain IMS101).